We begin with the raw amino-acid sequence, 153 residues long: Ribonuclease HI (153 aa).

Residues 1 to 141 form the RNase H type-1 domain; that stretch reads MKSVNIFTDG…CDELAKLGAN (141 aa). Mg(2+) is bound by residues Asp9, Glu47, Asp69, and Asp133.

The protein belongs to the RNase H family. As to quaternary structure, monomer. Requires Mg(2+) as cofactor.

It is found in the cytoplasm. It carries out the reaction Endonucleolytic cleavage to 5'-phosphomonoester.. In terms of biological role, endonuclease that specifically degrades the RNA of RNA-DNA hybrids. The sequence is that of Ribonuclease HI from Haemophilus ducreyi (strain 35000HP / ATCC 700724).